The sequence spans 292 residues: Formamidopyrimidine-DNA glycosylase (292 aa).

Pro2 serves as the catalytic Schiff-base intermediate with DNA. Glu3 functions as the Proton donor in the catalytic mechanism. Lys61 serves as the catalytic Proton donor; for beta-elimination activity. DNA contacts are provided by His103, Arg122, and Lys168. The FPG-type zinc finger occupies 254 to 288 (DAYGREGEHCRRCGAVMRREKFMNRSSFYCPRCQP). Arg278 (proton donor; for delta-elimination activity) is an active-site residue.

The protein belongs to the FPG family. Monomer. Requires Zn(2+) as cofactor.

It catalyses the reaction Hydrolysis of DNA containing ring-opened 7-methylguanine residues, releasing 2,6-diamino-4-hydroxy-5-(N-methyl)formamidopyrimidine.. The enzyme catalyses 2'-deoxyribonucleotide-(2'-deoxyribose 5'-phosphate)-2'-deoxyribonucleotide-DNA = a 3'-end 2'-deoxyribonucleotide-(2,3-dehydro-2,3-deoxyribose 5'-phosphate)-DNA + a 5'-end 5'-phospho-2'-deoxyribonucleoside-DNA + H(+). In terms of biological role, involved in base excision repair of DNA damaged by oxidation or by mutagenic agents. Acts as a DNA glycosylase that recognizes and removes damaged bases. Has a preference for oxidized purines, such as 7,8-dihydro-8-oxoguanine (8-oxoG). Has AP (apurinic/apyrimidinic) lyase activity and introduces nicks in the DNA strand. Cleaves the DNA backbone by beta-delta elimination to generate a single-strand break at the site of the removed base with both 3'- and 5'-phosphates. The polypeptide is Formamidopyrimidine-DNA glycosylase (Mycobacterium ulcerans (strain Agy99)).